Here is a 584-residue protein sequence, read N- to C-terminus: ATP-dependent ubiquitin transferase-like protein Cap2 (584 aa).

The tract at residues 1–137 (MKQELHHTLL…SGTSNDVELE (137 aa)) is E2-like domain. Cys90 (for E2-like domain) is an active-site residue. The segment at 138-338 (GEFSAYWQSE…LLSRNQSRPD (201 aa)) is linker domain. The adenylation plus E1-like domain stretch occupies residues 339-584 (VGNLSQKRIA…RFSGCNICDE (246 aa)). Cys522 acts as the For E1-like domain in catalysis.

In the C-terminal section; belongs to the HesA/MoeB/ThiF family. In terms of assembly, interacts with CD-NTase DncV in the presence and absence of phage T2. A Cap2 dimer is bound on either side by a DncV monomer.

In terms of biological role, CD-NTase priming component of a CBASS antiviral system. CBASS (cyclic oligonucleotide-based antiphage signaling system) provides immunity against bacteriophages. The CD-NTase protein (DncV) synthesizes cyclic nucleotides in response to infection; these serve as specific second messenger signals. The signals activate a diverse range of effectors, leading to bacterial cell death and thus abortive phage infection. A type II-A(GA) CBASS system. Its function is as follows. Primes DncV; acts as a protein transferase, conjugating DncV, the CD-NTase, to unidentified target(s) in the cell via an E1-E2 ubiquitin transferase-like mechanism. During the conjugation reaction DncV is probably transiently attached to AMP. Protein conjugation requires ATP. Protects E.coli against phage infection. When the CBASS operon (capV-dncV-cap2-cap3) is introduced in E.coli MG1655 there is about 100-fold protection against phages P1 and T2. When the operon is introduced in E.coli MG1655 there is a more than 10(3) decrease in the efficiency of T2 plaque formation. Protects 100-fold against phage T5, offers no protection against T7. When the operon is introduced in E.coli MG1655 it protects against phages T2, T4, T5 and T6. Another paper shows the operon confers protection against phages P1, T2, T5 and T6 but not T4 or lambda. The chain is ATP-dependent ubiquitin transferase-like protein Cap2 from Vibrio cholerae serotype O1 (strain ATCC 39315 / El Tor Inaba N16961).